Reading from the N-terminus, the 142-residue chain is Putative nickel-responsive regulator (142 aa).

Positions 77, 88, 90, and 96 each coordinate Ni(2+).

This sequence belongs to the transcriptional regulatory CopG/NikR family. In terms of assembly, homotetramer. Ni(2+) serves as cofactor.

Transcriptional regulator. In Halobacterium salinarum (strain ATCC 700922 / JCM 11081 / NRC-1) (Halobacterium halobium), this protein is Putative nickel-responsive regulator.